The following is a 443-amino-acid chain: Tubulin beta-2 chain (443 aa).

An MREI motif motif is present at residues 1 to 4 (MREI). Residues Q11, E69, S138, G142, T143, G144, N204, and N226 each coordinate GTP. E69 provides a ligand contact to Mg(2+). The residue at position 438 (E438) is a 5-glutamyl polyglutamate.

The protein belongs to the tubulin family. In terms of assembly, dimer of alpha and beta chains. A typical microtubule is a hollow water-filled tube with an outer diameter of 25 nm and an inner diameter of 15 nM. Alpha-beta heterodimers associate head-to-tail to form protofilaments running lengthwise along the microtubule wall with the beta-tubulin subunit facing the microtubule plus end conferring a structural polarity. Microtubules usually have 13 protofilaments but different protofilament numbers can be found in some organisms and specialized cells. Requires Mg(2+) as cofactor. In terms of processing, some glutamate residues at the C-terminus are polyglycylated, resulting in polyglycine chains on the gamma-carboxyl group. Glycylation is mainly limited to tubulin incorporated into axonemes (cilia and flagella) whereas glutamylation is prevalent in neuronal cells, centrioles, axonemes, and the mitotic spindle. Both modifications can coexist on the same protein on adjacent residues, and lowering polyglycylation levels increases polyglutamylation, and reciprocally. The precise function of polyglycylation is still unclear. Some glutamate residues at the C-terminus are polyglutamylated, resulting in polyglutamate chains on the gamma-carboxyl group. Polyglutamylation plays a key role in microtubule severing by spastin (SPAST). SPAST preferentially recognizes and acts on microtubules decorated with short polyglutamate tails: severing activity by SPAST increases as the number of glutamates per tubulin rises from one to eight, but decreases beyond this glutamylation threshold. In terms of tissue distribution, nervous system specific.

The protein resides in the cytoplasm. It is found in the cytoskeleton. In terms of biological role, tubulin is the major constituent of microtubules, a cylinder consisting of laterally associated linear protofilaments composed of alpha- and beta-tubulin heterodimers. Microtubules grow by the addition of GTP-tubulin dimers to the microtubule end, where a stabilizing cap forms. Below the cap, tubulin dimers are in GDP-bound state, owing to GTPase activity of alpha-tubulin. The protein is Tubulin beta-2 chain (tubb2) of Xenopus laevis (African clawed frog).